The sequence spans 122 residues: Large ribosomal subunit protein uL14 (122 aa).

Belongs to the universal ribosomal protein uL14 family. Part of the 50S ribosomal subunit. Forms a cluster with proteins L3 and L19. In the 70S ribosome, L14 and L19 interact and together make contacts with the 16S rRNA in bridges B5 and B8.

Its function is as follows. Binds to 23S rRNA. Forms part of two intersubunit bridges in the 70S ribosome. The chain is Large ribosomal subunit protein uL14 from Pediococcus pentosaceus (strain ATCC 25745 / CCUG 21536 / LMG 10740 / 183-1w).